The primary structure comprises 255 residues: Probable iron chelatin transport ATP-binding protein jhp_0821 (255 aa).

In terms of domain architecture, ABC transporter spans 3 to 240 (LEVKNLSFKY…HNLSALYDTP (238 aa)). An ATP-binding site is contributed by 35-42 (APNGSGKT).

Belongs to the ABC transporter superfamily.

The protein resides in the cell inner membrane. Its function is as follows. Part of a binding-protein-dependent transport system for an iron chelatin. Probably responsible for energy coupling to the transport system (Potential). This is Probable iron chelatin transport ATP-binding protein jhp_0821 from Helicobacter pylori (strain J99 / ATCC 700824) (Campylobacter pylori J99).